The chain runs to 151 residues: Transcriptional regulator MraZ (151 aa).

SpoVT-AbrB domains are found at residues 5 to 52 (ANAI…PLDE) and 81 to 124 (AVDL…DEDA).

This sequence belongs to the MraZ family. In terms of assembly, forms oligomers.

It localises to the cytoplasm. It is found in the nucleoid. The protein is Transcriptional regulator MraZ of Pseudomonas fluorescens (strain Pf0-1).